The primary structure comprises 499 residues: Dipeptide and tripeptide permease A (499 aa).

Topologically, residues 1–34 are cytoplasmic; sequence MSTANKKPAESVSMNAFKQPRSFYLIFSIELWER. A helical transmembrane segment spans residues 35-55; the sequence is FGFYGLQGIMAVYLVKQLGMS. The Periplasmic segment spans residues 56–59; it reads EADS. Residues 60–80 traverse the membrane as a helical segment; the sequence is ITLFSSFSALVYGLVAIGGWL. Residues 81 to 89 lie on the Cytoplasmic side of the membrane; it reads GDKVLGTKR. Residues 90-110 traverse the membrane as a helical segment; sequence VIMLGTIVLAIGYALVAWSGH. Residue aspartate 111 is a topological domain, periplasmic. The helical transmembrane segment at 112 to 132 threads the bilayer; sequence AAIVYFGMATIAVGNGLFKAN. The Cytoplasmic segment spans residues 133–153; sequence PSALLSTCYEKDDPRLDGAFT. A helical membrane pass occupies residues 154–174; it reads MYYMAINIGSFFSMLATPWLA. Over 175 to 178 the chain is Periplasmic; that stretch reads EKFG. Residues 179-199 form a helical membrane-spanning segment; the sequence is WSVAFSLSFVGMLITLVNFIF. Residues 200–217 lie on the Cytoplasmic side of the membrane; it reads CKKWVKDYGSKPDFAPLH. A helical membrane pass occupies residues 218–238; sequence VGKLLATIVGIVVLVAIATWL. Over 239–246 the chain is Periplasmic; sequence LHNQGIAR. Residues 247 to 267 traverse the membrane as a helical segment; that stretch reads LVLGVVALGIVIIFAKEAFAM. At 268-274 the chain is on the cytoplasmic side; the sequence is QGAARRK. Residues 275 to 295 traverse the membrane as a helical segment; it reads MIVAFILMLEAIVFFVLYQQM. Residues 296–320 are Periplasmic-facing; it reads PTSLNFFAIRNVEHSILGIAFQPEQ. Residues 321 to 341 traverse the membrane as a helical segment; it reads FQALNPFWIMIGSPILAAIYN. Over 342–350 the chain is Cytoplasmic; it reads KMGDRLPMP. A helical membrane pass occupies residues 351–371; the sequence is FKFTIGMLLCSGAFLVLPLGA. Over 372-383 the chain is Periplasmic; that stretch reads KFASEAGIVSVN. A helical transmembrane segment spans residues 384-404; the sequence is WLILSYALQSIGELMISGLGL. At 405–414 the chain is on the cytoplasmic side; sequence AMVAQLVPQR. A helical membrane pass occupies residues 415-435; that stretch reads LMGFIMGSWFLTTAGAAMIAG. At 436–459 the chain is on the periplasmic side; it reads KVANLMAVPENVSDPLQSLEVYGR. Residues 460–480 form a helical membrane-spanning segment; it reads VFMQIGIATGVIAVLMLLTAP. Residues 481–499 lie on the Cytoplasmic side of the membrane; it reads LLNRMTQEDKPKETDTAHA.

This sequence belongs to the major facilitator superfamily. Proton-dependent oligopeptide transporter (POT/PTR) (TC 2.A.17) family. DtpA subfamily.

The protein localises to the cell inner membrane. Its function is as follows. Proton-dependent permease that transports di- and tripeptides. The chain is Dipeptide and tripeptide permease A from Cronobacter turicensis (strain DSM 18703 / CCUG 55852 / LMG 23827 / z3032).